Here is a 144-residue protein sequence, read N- to C-terminus: MDIKEVREYLPHRYPFLLIDRVLNIEPGKRIEALKNVTINEPFFNGHFPEEPIMPGVLIIEAMAQAAGILGFVTENKKPSDGYIYLLVGTDKARFKRQVVPGDTLHLFAEYVVIKRNIIKFTCEAQVDGKTVASAEMLVAEQKV.

His47 is a catalytic residue.

This sequence belongs to the thioester dehydratase family. FabZ subfamily.

Its subcellular location is the cytoplasm. The catalysed reaction is a (3R)-hydroxyacyl-[ACP] = a (2E)-enoyl-[ACP] + H2O. Its function is as follows. Involved in unsaturated fatty acids biosynthesis. Catalyzes the dehydration of short chain beta-hydroxyacyl-ACPs and long chain saturated and unsaturated beta-hydroxyacyl-ACPs. This Alcanivorax borkumensis (strain ATCC 700651 / DSM 11573 / NCIMB 13689 / SK2) protein is 3-hydroxyacyl-[acyl-carrier-protein] dehydratase FabZ.